Consider the following 386-residue polypeptide: Protein DOM34 (386 aa).

This sequence belongs to the eukaryotic release factor 1 family. Pelota subfamily. As to quaternary structure, monomer. Component of the Dom34-Hbs1 complex, also named Pelota-HBS1L complex, composed of DOM34 and HBS1. Requires a divalent metal cation as cofactor.

It is found in the cytoplasm. In terms of biological role, component of the Dom34-Hbs1 complex, a complex that recognizes stalled ribosomes and triggers the No-Go Decay (NGD) pathway. In the Dom34-Hbs1 complex, DOM34 recognizes ribosomes stalled at the 3' end of an mRNA and engages stalled ribosomes by destabilizing mRNA in the mRNA channel. Following ribosome-binding, the Dom34-Hbs1 complex promotes the disassembly of stalled ribosomes, followed by degradation of damaged mRNAs as part of the NGD pathway. The Dom34-Hbs1 complex is also involved in non-functional rRNA decay. This is Protein DOM34 from Saccharomyces cerevisiae (strain ATCC 204508 / S288c) (Baker's yeast).